The following is a 246-amino-acid chain: MKPSDVRSKAFAMPLTSPAFPMGPYRFVDREFLIITYRTDPDRLREIVPEPLQVTEPLVHYEFIRMADSTGFGDYTESGQVIPVEYNGQAGGYTLAMYLDDHPPIAGGRELWGFPKKLASPTLHVNTDHILGTLDYGKVRVATGTMGYKHKELDIDEQTKRLAGPNFLLKIIPHVDGTARVCELVRYYMQDIKMKGAWTGPASLELAPHALAPVADLPVLEIVEARHLVADLTLGLGEVVYDYLAQ.

K116 serves as the catalytic Schiff-base intermediate with acetoacetate.

The protein belongs to the ADC family.

The enzyme catalyses acetoacetate + H(+) = acetone + CO2. Its function is as follows. Catalyzes the conversion of acetoacetate to acetone and carbon dioxide. This Burkholderia cenocepacia (strain ATCC BAA-245 / DSM 16553 / LMG 16656 / NCTC 13227 / J2315 / CF5610) (Burkholderia cepacia (strain J2315)) protein is Acetoacetate decarboxylase.